Reading from the N-terminus, the 284-residue chain is Nucleotide-binding protein NMB0738 (284 aa).

8-15 (GLSGSGKS) lines the ATP pocket. 58–61 (DVRS) contributes to the GTP binding site.

Belongs to the RapZ-like family.

Functionally, displays ATPase and GTPase activities. The polypeptide is Nucleotide-binding protein NMB0738 (Neisseria meningitidis serogroup B (strain ATCC BAA-335 / MC58)).